We begin with the raw amino-acid sequence, 85 residues long: Mitochondrial protein pet191 homolog (85 aa).

The region spanning 18–61 (HSDCMFVKKKSARECLKNKDELPEECKNLIEAYGECKRQMLDMT) is the CHCH domain. The Cx10C motif motif lies at 21-32 (CMFVKKKSAREC). Disulfide bonds link Cys21–Cys53 and Cys32–Cys43. A Cx9C motif motif is present at residues 43–53 (CKNLIEAYGEC). A disordered region spans residues 65–85 (RIAPEKNTDQDTEKPSNVDEQ).

This sequence belongs to the PET191 family.

The protein resides in the mitochondrion. Its function is as follows. Involved in the assembly of cytochrome c oxidase. In Schizosaccharomyces pombe (strain 972 / ATCC 24843) (Fission yeast), this protein is Mitochondrial protein pet191 homolog.